The chain runs to 412 residues: Inositol polyphosphate-5-phosphatase A (412 aa).

Cys-409 carries S-farnesyl cysteine lipidation. Positions 410–412 (VVQ) are cleaved as a propeptide — removed in mature form.

Belongs to the inositol 1,4,5-trisphosphate 5-phosphatase type I family. In terms of assembly, interacts with TASOR. Post-translationally, isoprenylation at Cys-409 is required for localization at the membrane.

It is found in the cell membrane. It localises to the cell projection. The protein resides in the dendrite. The catalysed reaction is 1D-myo-inositol 1,4,5-trisphosphate + H2O = 1D-myo-inositol 1,4-bisphosphate + phosphate. It catalyses the reaction 1D-myo-inositol 1,3,4,5-tetrakisphosphate + H2O = 1D-myo-inositol 1,3,4-trisphosphate + phosphate. Inhibited by EDTA and 2,3-bisphosphoglycerate. Functionally, phosphatase that specifically hydrolyzes the 5-phosphate of inositol 1,4,5-trisphosphate to inositol 1,4-bisphosphate, and inositol 1,3,4,5-tetrasphosphate to inositol 1,3,4-trisphosphate. Plays a crucial role in the survival of cerebellar Purkinje cells. This Canis lupus familiaris (Dog) protein is Inositol polyphosphate-5-phosphatase A (INPP5A).